The following is a 371-amino-acid chain: MPHHYILTLFGLLPVATNISTWWNFGSMLLTCLALQTLTGFFLAVHYTANINLAFSSIIHIIRDVPHGWMMQNLHAIGASMFFICIYIHIARGLYYGSYLNKETWMSGITLLIILMATAFFGYVLPWGQMSFWAATVITNLLTAVPYLGTTLTTWLWGGFAINDPTLTRFFALHFILPFAIISLSSLHVILLHEEGSSNPLGTNPDIDKIPFHPYHSYKDLLLLTLMILSLLIIVSFFPDIFNDPDNFSKANPLVTPQHIKPEWYFLFAYGILRSIPNKLGGALALVMSIMILLTIPFTHTSTMRSMTFRPLSQLMFWTLVSTFITITWAATKPVEPPFIIISQVTATLYFTFFISTPILGWLENKMTNHP.

The next 4 helical transmembrane spans lie at 25-45 (FGSM…FLAV), 69-90 (WMMQ…YIHI), 105-125 (WMSG…GYVL), and 170-190 (FFAL…LHVI). His75 and His89 together coordinate heme b. Residues His174 and His188 each coordinate heme b. His193 serves as a coordination point for a ubiquinone. Transmembrane regions (helical) follow at residues 218-238 (YKDL…VSFF), 280-300 (LGGA…PFTH), 312-332 (LSQL…WAAT), and 339-358 (FIII…ISTP).

The protein belongs to the cytochrome b family. As to quaternary structure, the cytochrome bc1 complex contains 3 respiratory subunits (MT-CYB, CYC1 and UQCRFS1), 2 core proteins (UQCRC1 and UQCRC2) and probably 6 low-molecular weight proteins. Heme b is required as a cofactor.

It is found in the mitochondrion inner membrane. In terms of biological role, component of the ubiquinol-cytochrome c reductase complex (complex III or cytochrome b-c1 complex) that is part of the mitochondrial respiratory chain. The b-c1 complex mediates electron transfer from ubiquinol to cytochrome c. Contributes to the generation of a proton gradient across the mitochondrial membrane that is then used for ATP synthesis. This Python sebae (African rock python) protein is Cytochrome b (MT-CYB).